The sequence spans 286 residues: Acyl-CoA thioesterase 2 (286 aa).

Active-site charge relay system residues include Asp-204, Thr-228, and Gln-278.

The protein belongs to the C/M/P thioester hydrolase family. In terms of assembly, homotetramer.

The enzyme catalyses a fatty acyl-CoA + H2O = a fatty acid + CoA + H(+). Thioesterase that has relatively broad substrate specificity, hydrolyzing primarily medium- and long-chain acyl-CoA substrates to free fatty acids and CoA. The polypeptide is Acyl-CoA thioesterase 2 (tesB) (Haemophilus influenzae (strain ATCC 51907 / DSM 11121 / KW20 / Rd)).